Consider the following 201-residue polypeptide: Imidazole glycerol phosphate synthase subunit HisH 1 (201 aa).

Residues 1–201 (MIALIDYKAG…LKLLENFARL (201 aa)) form the Glutamine amidotransferase type-1 domain. The active-site Nucleophile is C80. Active-site residues include H183 and E185.

As to quaternary structure, heterodimer of HisH and HisF.

Its subcellular location is the cytoplasm. It catalyses the reaction 5-[(5-phospho-1-deoxy-D-ribulos-1-ylimino)methylamino]-1-(5-phospho-beta-D-ribosyl)imidazole-4-carboxamide + L-glutamine = D-erythro-1-(imidazol-4-yl)glycerol 3-phosphate + 5-amino-1-(5-phospho-beta-D-ribosyl)imidazole-4-carboxamide + L-glutamate + H(+). It carries out the reaction L-glutamine + H2O = L-glutamate + NH4(+). Its pathway is amino-acid biosynthesis; L-histidine biosynthesis; L-histidine from 5-phospho-alpha-D-ribose 1-diphosphate: step 5/9. Its function is as follows. IGPS catalyzes the conversion of PRFAR and glutamine to IGP, AICAR and glutamate. The HisH subunit provides the glutamine amidotransferase activity that produces the ammonia necessary to HisF for the synthesis of IGP and AICAR. The protein is Imidazole glycerol phosphate synthase subunit HisH 1 (hisH1) of Campylobacter jejuni subsp. jejuni serotype O:23/36 (strain 81-176).